The sequence spans 1383 residues: WD repeat-containing protein dyf-2 (1383 aa).

WD repeat units lie at residues 32-71 (EHGS…IDAL), 72-112 (NPTG…TDTV), 118-157 (SSKE…RIAV), 160-198 (KHQR…VSTT), and 337-376 (ETEK…LAAS). TPR repeat units follow at residues 756 to 789 (EEKN…MEAL), 810 to 847 (PKEI…NPQN), 885 to 918 (RVVK…DRAA), 940 to 973 (PKIH…DNQV), 996 to 1029 (IEGA…QEAF), 1031 to 1053 (LAEK…NISQ), and 1064 to 1097 (VNDM…ENCV).

Component of the IFT complex A (IFT-A) composed of at least che-11, daf-10, dyf-2, ift-139, ift-43 and ifta-1. In terms of tissue distribution, expressed in ciliated sensory neurons.

It localises to the cell projection. It is found in the cilium. Its function is as follows. Component of the IFT complex A (IFT-A), a complex required for retrograde ciliary transport. Moves along the ciliary axoneme and is involved in the assembly, localization and the movement of other intraflagellar transport (IFT) proteins along the cilia axoneme. May also associate with the BBSome complex in order to mediate ciliary transport. Regulates cilia biogenesis, morphology and sensitivity to environmental cues. This chain is WD repeat-containing protein dyf-2, found in Caenorhabditis elegans.